A 193-amino-acid polypeptide reads, in one-letter code: Cytidylate kinase (193 aa).

Position 12-20 (12-20) interacts with ATP; it reads GLAGSGTTT.

This sequence belongs to the cytidylate kinase family. Type 2 subfamily.

It is found in the cytoplasm. The catalysed reaction is CMP + ATP = CDP + ADP. It carries out the reaction dCMP + ATP = dCDP + ADP. The polypeptide is Cytidylate kinase (Thermococcus kodakarensis (strain ATCC BAA-918 / JCM 12380 / KOD1) (Pyrococcus kodakaraensis (strain KOD1))).